We begin with the raw amino-acid sequence, 334 residues long: N-acetyl-gamma-glutamyl-phosphate reductase (334 aa).

Cys-154 is an active-site residue.

The protein belongs to the NAGSA dehydrogenase family. Type 1 subfamily.

The protein localises to the cytoplasm. It catalyses the reaction N-acetyl-L-glutamate 5-semialdehyde + phosphate + NADP(+) = N-acetyl-L-glutamyl 5-phosphate + NADPH + H(+). The protein operates within amino-acid biosynthesis; L-arginine biosynthesis; N(2)-acetyl-L-ornithine from L-glutamate: step 3/4. In terms of biological role, catalyzes the NADPH-dependent reduction of N-acetyl-5-glutamyl phosphate to yield N-acetyl-L-glutamate 5-semialdehyde. In Yersinia pestis, this protein is N-acetyl-gamma-glutamyl-phosphate reductase.